The following is a 359-amino-acid chain: tRNA N6-adenosine threonylcarbamoyltransferase (359 aa).

Positions 115 and 119 each coordinate Fe cation. Substrate is bound by residues 137-141, D170, G183, and N283; that span reads LVSGG. Position 311 (D311) interacts with Fe cation. Residues 328–359 are disordered; that stretch reads APDSLDIAPRSRWPLDEKSAPVFGTGRRGAKA.

Belongs to the KAE1 / TsaD family. The cofactor is Fe(2+).

The protein resides in the cytoplasm. The catalysed reaction is L-threonylcarbamoyladenylate + adenosine(37) in tRNA = N(6)-L-threonylcarbamoyladenosine(37) in tRNA + AMP + H(+). In terms of biological role, required for the formation of a threonylcarbamoyl group on adenosine at position 37 (t(6)A37) in tRNAs that read codons beginning with adenine. Is involved in the transfer of the threonylcarbamoyl moiety of threonylcarbamoyl-AMP (TC-AMP) to the N6 group of A37, together with TsaE and TsaB. TsaD likely plays a direct catalytic role in this reaction. This chain is tRNA N6-adenosine threonylcarbamoyltransferase, found in Brucella ovis (strain ATCC 25840 / 63/290 / NCTC 10512).